Here is a 168-residue protein sequence, read N- to C-terminus: Bifunctional protein PyrR (168 aa).

The short motif at 90 to 102 is the PRPP-binding element; that stretch reads LVLIDDVLMSGRT.

The protein belongs to the purine/pyrimidine phosphoribosyltransferase family. PyrR subfamily.

The enzyme catalyses UMP + diphosphate = 5-phospho-alpha-D-ribose 1-diphosphate + uracil. Functionally, regulates the transcription of the pyrimidine nucleotide (pyr) operon in response to exogenous pyrimidines. In terms of biological role, also displays a weak uracil phosphoribosyltransferase activity which is not physiologically significant. The chain is Bifunctional protein PyrR from Pseudomonas fluorescens (strain ATCC BAA-477 / NRRL B-23932 / Pf-5).